Here is a 532-residue protein sequence, read N- to C-terminus: Bone morphogenetic protein receptor type-1A (532 aa).

The signal sequence occupies residues 1 to 23 (MPQLYIYIRLLGAYLFIISRVQG). Residues 24–152 (QNLDSMLHGT…IGPFFDGSIR (129 aa)) lie on the Extracellular side of the membrane. Intrachain disulfides connect Cys61–Cys82, Cys63–Cys67, and Cys76–Cys100. Asn73 carries N-linked (GlcNAc...) asparagine glycosylation. The interval 107 to 109 (DFQ) is mediates specificity for BMP ligand. Cystine bridges form between Cys110–Cys124 and Cys125–Cys130. The chain crosses the membrane as a helical span at residues 153-176 (WLVLLISMAVCIIAMIIFSSCFCY). The Cytoplasmic segment spans residues 177–532 (KHYCKSISSR…KMVESQDVKI (356 aa)). The region spanning 204-233 (ESLKDLIDQSQSSGSGSGLPLLVQRTIAKQ) is the GS domain. Positions 234 to 525 (IQMVRQVGKG…RIKKTLAKMV (292 aa)) constitute a Protein kinase domain. ATP-binding positions include 240-248 (VGKGRYGEV) and Lys261. Asp362 serves as the catalytic Proton acceptor.

Belongs to the protein kinase superfamily. TKL Ser/Thr protein kinase family. TGFB receptor subfamily. As to quaternary structure, interacts with low affinity with GDF5; positively regulates chondrocyte differentiation. Interacts with BMP4. Interacts with SCUBE3. Interacts with TSC22D1/TSC-22. Interacts with BMP2; the interaction may induce HAMP expression. Interacts with BMP6. Interacts with heterodimers composed of BMP2 and BMP6 in vitro; the interaction may induce HAMP expression. Interacts with TGFBR3. Mg(2+) is required as a cofactor. It depends on Mn(2+) as a cofactor. In terms of processing, glycosylated. In terms of tissue distribution, highly expressed in skeletal muscle.

Its subcellular location is the cell membrane. It localises to the cell surface. The catalysed reaction is L-threonyl-[receptor-protein] + ATP = O-phospho-L-threonyl-[receptor-protein] + ADP + H(+). The enzyme catalyses L-seryl-[receptor-protein] + ATP = O-phospho-L-seryl-[receptor-protein] + ADP + H(+). Functionally, on ligand binding, forms a receptor complex consisting of two type II and two type I transmembrane serine/threonine kinases. Type II receptors phosphorylate and activate type I receptors which autophosphorylate, then bind and activate SMAD transcriptional regulators. Receptor for BMP2, BMP4, GDF5 and GDF6. Positively regulates chondrocyte differentiation through GDF5 interaction. Mediates induction of adipogenesis by GDF6. May promote the expression of HAMP, potentially via its interaction with BMP2. In Homo sapiens (Human), this protein is Bone morphogenetic protein receptor type-1A (BMPR1A).